Reading from the N-terminus, the 182-residue chain is ATP synthase subunit delta (182 aa).

The protein belongs to the ATPase delta chain family. F-type ATPases have 2 components, F(1) - the catalytic core - and F(0) - the membrane proton channel. F(1) has five subunits: alpha(3), beta(3), gamma(1), delta(1), epsilon(1). F(0) has three main subunits: a(1), b(2) and c(10-14). The alpha and beta chains form an alternating ring which encloses part of the gamma chain. F(1) is attached to F(0) by a central stalk formed by the gamma and epsilon chains, while a peripheral stalk is formed by the delta and b chains.

The protein localises to the cell inner membrane. Its function is as follows. F(1)F(0) ATP synthase produces ATP from ADP in the presence of a proton or sodium gradient. F-type ATPases consist of two structural domains, F(1) containing the extramembraneous catalytic core and F(0) containing the membrane proton channel, linked together by a central stalk and a peripheral stalk. During catalysis, ATP synthesis in the catalytic domain of F(1) is coupled via a rotary mechanism of the central stalk subunits to proton translocation. In terms of biological role, this protein is part of the stalk that links CF(0) to CF(1). It either transmits conformational changes from CF(0) to CF(1) or is implicated in proton conduction. The protein is ATP synthase subunit delta of Hydrogenobaculum sp. (strain Y04AAS1).